Reading from the N-terminus, the 548-residue chain is MKKVTAMLFSMAVGLNAVSMAAKAKASEEQETDVLLIGGGIMSATLGTYLRELEPEWSMTMLERLEGVAQESSNGWNNAGTGHSALMELNYTPQNADGSISIEKAVAINEAFQISRQFWAHQVERGVLRTPRSFINTVPHMSFVWGEDNVNFLRARYAALQQSSLFRGMRYSEDHAQIKEWAPLVMEGRDPQQKVAATRTEIGTDVNYGEITRQLIASLQKKSNFSLQLSSEVRALKRNDDNTWTVTVADLKNGTAQNIRAKFVFIGAGGAALKLLQESGIPEAKDYAGFPVGGQFLVSENPDVVNHHLAKVYGKASVGAPPMSVPHIDTRVLDGKRVVLFGPFATFSTKFLKNGSLWDLMSSTTTSNVMPMMHVGLDNFDLVKYLVSQVMLSEEDRFEALKEYYPQAKKEDWRLWQAGQRVQIIKRDADKGGVLRLGTEVVSDQQGTIAALLGASPGASTAAPIMLDLLEKVFGDRVSSPQWQATLKAIVPSYGRKLNGDVAATERELQYTSEVLGLKYDKPQAADSTPKPQLKPQPVQKEVADIAL.

Positions 521 to 548 (DKPQAADSTPKPQLKPQPVQKEVADIAL) are disordered. Residues 530-541 (PKPQLKPQPVQK) show a composition bias toward low complexity.

Belongs to the MQO family. It depends on FAD as a cofactor.

The enzyme catalyses (S)-malate + a quinone = a quinol + oxaloacetate. It participates in carbohydrate metabolism; tricarboxylic acid cycle; oxaloacetate from (S)-malate (quinone route): step 1/1. The protein is Probable malate:quinone oxidoreductase of Shigella boydii serotype 4 (strain Sb227).